We begin with the raw amino-acid sequence, 49 residues long: Osteocalcin (49 aa).

One can recognise a Gla domain in the interval 1 to 47 (YLDSGLGAPVPYPDPLEPKREVCELNPNCDELADHIGFQEAYQRFYG). Ca(2+)-binding residues include Glu17, Glu21, Glu24, and Asp30. A 4-carboxyglutamate mark is found at Glu17, Glu21, and Glu24. A disulfide bridge connects residues Cys23 and Cys29.

It belongs to the osteocalcin/matrix Gla protein family. Gamma-carboxyglutamate residues are formed by vitamin K dependent carboxylation by GGCX. These residues are essential for the binding of calcium. Decarboxylation promotes the hormone activity.

It is found in the secreted. In terms of biological role, the carboxylated form is one of the main organic components of the bone matrix, which constitutes 1-2% of the total bone protein. It acts as a negative regulator of bone formation and is required to limit bone formation without impairing bone resorption or mineralization. The carboxylated form binds strongly to apatite and calcium. Functionally, the uncarboxylated form acts as a hormone secreted by osteoblasts, which regulates different cellular processes, such as energy metabolism, male fertility and brain development. Regulates of energy metabolism by acting as a hormone favoring pancreatic beta-cell proliferation, insulin secretion and sensitivity and energy expenditure. Uncarboxylated osteocalcin hormone also promotes testosterone production in the testes: acts as a ligand for G protein-coupled receptor GPRC6A at the surface of Leydig cells, initiating a signaling response that promotes the expression of enzymes required for testosterone synthesis in a CREB-dependent manner. Also acts as a regulator of brain development: osteocalcin hormone crosses the blood-brain barrier and acts as a ligand for GPR158 on neurons, initiating a signaling response that prevents neuronal apoptosis in the hippocampus, favors the synthesis of all monoamine neurotransmitters and inhibits that of gamma-aminobutyric acid (GABA). Osteocalcin also crosses the placenta during pregnancy and maternal osteocalcin is required for fetal brain development. This Canis lupus familiaris (Dog) protein is Osteocalcin (BGLAP).